The chain runs to 241 residues: Probable transcriptional regulatory protein Mpe_A1337 (241 aa).

Positions 1–20 (MAGHSKWANIQHRKGRQDEK) are disordered.

The protein belongs to the TACO1 family.

Its subcellular location is the cytoplasm. This chain is Probable transcriptional regulatory protein Mpe_A1337, found in Methylibium petroleiphilum (strain ATCC BAA-1232 / LMG 22953 / PM1).